We begin with the raw amino-acid sequence, 842 residues long: Elongation factor 2 (842 aa).

The 237-residue stretch at 17–253 (TNVRNMSVIA…LWGDSYFNPK (237 aa)) folds into the tr-type G domain. GTP-binding positions include 26–33 (AHVDHGKS), 158–161 (NKVD), and 213–215 (SGL). Residue H699 is modified to Diphthamide.

Belongs to the TRAFAC class translation factor GTPase superfamily. Classic translation factor GTPase family. EF-G/EF-2 subfamily.

It is found in the cytoplasm. It carries out the reaction GTP + H2O = GDP + phosphate + H(+). In terms of biological role, catalyzes the GTP-dependent ribosomal translocation step during translation elongation. During this step, the ribosome changes from the pre-translocational (PRE) to the post-translocational (POST) state as the newly formed A-site-bound peptidyl-tRNA and P-site-bound deacylated tRNA move to the P and E sites, respectively. Catalyzes the coordinated movement of the two tRNA molecules, the mRNA and conformational changes in the ribosome. The sequence is that of Elongation factor 2 (EFT1) from Komagataella pastoris (Yeast).